Consider the following 586-residue polypeptide: GRB2-associated-binding protein 3 (586 aa).

Positions 5 to 117 (DAVCTGWLVK…WVHSISQVCN (113 aa)) constitute a PH domain. 2 disordered regions span residues 149-171 (AHAASSSLPRDDPNTNAVATEET) and 281-335 (SSTI…KKPE). Over residues 283-292 (TIQVDKNQGS) the composition is skewed to polar residues. Basic and acidic residues predominate over residues 316–326 (HLSERRQEEWS). Ser344 is modified (phosphoserine). Positions 401–453 (GASGLGPHCSPDDYIPMNSGSISSPLPELPANLEPPPVNRDLKPQRKSRPPPL) are disordered. Ser482 is modified (phosphoserine).

This sequence belongs to the GAB family. In terms of assembly, interacts with PIK3R/p85, SHP2 and GRAP2/MONA. May interact with Grb2. In terms of processing, phosphorylated on tyrosine residue(s) after macrophage colony-stimulating factor (M-CSF) receptor stimulation.

The polypeptide is GRB2-associated-binding protein 3 (GAB3) (Homo sapiens (Human)).